The chain runs to 942 residues: Netrin receptor UNC5B-b (942 aa).

The first 30 residues, 1–30 (MYLSRIPGGAALAALLVALLLCCNFPPSIA), serve as a signal peptide directing secretion. Residues 31–380 (GIEYSDVLPD…LESTGDVALY (350 aa)) are Extracellular-facing. One can recognise an Ig-like domain in the interval 51-148 (PHFLLEPEDA…AGTTKSKRSY (98 aa)). Intrachain disulfides connect Cys72–Cys133, Cys84–Cys131, Cys177–Cys228, Cys261–Cys298, Cys265–Cys302, Cys276–Cys288, Cys317–Cys351, Cys321–Cys356, and Cys329–Cys341. One can recognise an Ig-like C2-type domain in the interval 150–245 (RIAYLRKNFD…KRRSTTATVI (96 aa)). N-linked (GlcNAc...) asparagine glycosylation occurs at Asn225. TSP type-1 domains lie at 249-303 (NGGW…TMCP) and 305-357 (DGGW…GLCM). Asn350 carries N-linked (GlcNAc...) asparagine glycosylation. Residues 381-401 (AGLVVAIFIIIILLMAVGIVV) traverse the membrane as a helical segment. Residues 402–942 (YRRNCREFDT…MLVMATDGDC (541 aa)) are Cytoplasmic-facing. A ZU5 domain is found at 541 to 684 (NSVTGTFGSL…LGTYAFVGES (144 aa)). The tract at residues 687-835 (RSAIKRLQLA…LEENVKSFDP (149 aa)) is UPA domain. In terms of domain architecture, Death spans 863–940 (ICNSLDAPNS…EMMLVMATDG (78 aa)).

This sequence belongs to the unc-5 family. Interacts (via extracellular domain) with flrt3 (via extracellular domain). Interacts with rnd1.

The protein localises to the cell membrane. Plays a role in cell-cell adhesion during embryonic development. Receptor for netrin required for axon guidance. Mediates axon repulsion of neuronal growth cones in the developing nervous system upon ligand binding. This is Netrin receptor UNC5B-b from Xenopus laevis (African clawed frog).